The following is a 1078-amino-acid chain: Carbamoyl phosphate synthase large chain (1078 aa).

Positions 1–401 (MARQPLVSSV…ALQKAVRGLE (401 aa)) are carboxyphosphate synthetic domain. Arginine 129, arginine 169, glycine 175, glycine 176, arginine 208, leucine 210, glutamate 215, glycine 241, valine 242, histidine 243, glutamine 284, and glutamate 298 together coordinate ATP. Residues 133–327 (KELLLEIGEP…IARIAAKLAI (195 aa)) form the ATP-grasp 1 domain. Positions 284, 298, and 300 each coordinate Mg(2+). Mn(2+) is bound by residues glutamine 284, glutamate 298, and asparagine 300. The tract at residues 402–546 (TDQTDLTWED…YATYEDENEA (145 aa)) is oligomerization domain. The tract at residues 547–935 (PPLDSPKAVV…ALAKAFLAAG (389 aa)) is carbamoyl phosphate synthetic domain. An ATP-grasp 2 domain is found at 677–867 (ERFLHELGIP…MVDVATQILL (191 aa)). Residues arginine 713, lysine 752, leucine 754, glutamate 758, glycine 783, valine 784, histidine 785, serine 786, glutamine 826, and glutamate 838 each contribute to the ATP site. The Mg(2+) site is built by glutamine 826, glutamate 838, and asparagine 840. 3 residues coordinate Mn(2+): glutamine 826, glutamate 838, and asparagine 840. In terms of domain architecture, MGS-like spans 936–1078 (LAIERGAPVL…AYRTREAVLA (143 aa)). The interval 936 to 1078 (LAIERGAPVL…AYRTREAVLA (143 aa)) is allosteric domain.

This sequence belongs to the CarB family. Composed of two chains; the small (or glutamine) chain promotes the hydrolysis of glutamine to ammonia, which is used by the large (or ammonia) chain to synthesize carbamoyl phosphate. Tetramer of heterodimers (alpha,beta)4. It depends on Mg(2+) as a cofactor. Mn(2+) serves as cofactor.

It carries out the reaction hydrogencarbonate + L-glutamine + 2 ATP + H2O = carbamoyl phosphate + L-glutamate + 2 ADP + phosphate + 2 H(+). The enzyme catalyses hydrogencarbonate + NH4(+) + 2 ATP = carbamoyl phosphate + 2 ADP + phosphate + 2 H(+). It participates in amino-acid biosynthesis; L-arginine biosynthesis; carbamoyl phosphate from bicarbonate: step 1/1. Its pathway is pyrimidine metabolism; UMP biosynthesis via de novo pathway; (S)-dihydroorotate from bicarbonate: step 1/3. Its function is as follows. Large subunit of the glutamine-dependent carbamoyl phosphate synthetase (CPSase). CPSase catalyzes the formation of carbamoyl phosphate from the ammonia moiety of glutamine, carbonate, and phosphate donated by ATP, constituting the first step of 2 biosynthetic pathways, one leading to arginine and/or urea and the other to pyrimidine nucleotides. The large subunit (synthetase) binds the substrates ammonia (free or transferred from glutamine from the small subunit), hydrogencarbonate and ATP and carries out an ATP-coupled ligase reaction, activating hydrogencarbonate by forming carboxy phosphate which reacts with ammonia to form carbamoyl phosphate. This chain is Carbamoyl phosphate synthase large chain, found in Thermomicrobium roseum (strain ATCC 27502 / DSM 5159 / P-2).